The sequence spans 344 residues: Ferrochelatase (344 aa).

The Fe cation site is built by His214 and Glu295.

The protein belongs to the ferrochelatase family.

Its subcellular location is the cytoplasm. The catalysed reaction is heme b + 2 H(+) = protoporphyrin IX + Fe(2+). Its pathway is porphyrin-containing compound metabolism; protoheme biosynthesis; protoheme from protoporphyrin-IX: step 1/1. In terms of biological role, catalyzes the ferrous insertion into protoporphyrin IX. The sequence is that of Ferrochelatase from Rhizobium leguminosarum bv. trifolii (strain WSM2304).